Here is a 421-residue protein sequence, read N- to C-terminus: Histidine--tRNA ligase (421 aa).

The protein belongs to the class-II aminoacyl-tRNA synthetase family. In terms of assembly, homodimer.

The protein resides in the cytoplasm. The enzyme catalyses tRNA(His) + L-histidine + ATP = L-histidyl-tRNA(His) + AMP + diphosphate + H(+). This chain is Histidine--tRNA ligase, found in Natranaerobius thermophilus (strain ATCC BAA-1301 / DSM 18059 / JW/NM-WN-LF).